The sequence spans 469 residues: Putative dipeptidase SAR1836 (469 aa).

Residue His-84 participates in Zn(2+) binding. Residue Asp-86 is part of the active site. A Zn(2+)-binding site is contributed by Asp-115. Catalysis depends on Glu-149, which acts as the Proton acceptor. 3 residues coordinate Zn(2+): Glu-150, Asp-173, and His-440.

It belongs to the peptidase M20A family. Requires Zn(2+) as cofactor.

The chain is Putative dipeptidase SAR1836 from Staphylococcus aureus (strain MRSA252).